We begin with the raw amino-acid sequence, 79 residues long: MKLTCVLIISVLFLTASQLITAVYSRDKQQYRAARLRDEMRNLKGARDCGEQGQGCYTRPCCPGLECLGGGTGGGVCQP.

A signal peptide spans 1–22 (MKLTCVLIISVLFLTASQLITA). The propeptide occupies 23–47 (VYSRDKQQYRAARLRDEMRNLKGAR). 3 disulfide bridges follow: Cys49–Cys62, Cys56–Cys67, and Cys61–Cys77. Pro60 and Pro63 each carry 4-hydroxyproline.

The protein belongs to the conotoxin O1 superfamily. Expressed by the venom duct.

The protein resides in the secreted. Ion channel inhibitor that inhibits the increase in intracellular calcium upon depolarization in DRG neurons. In vivo, both intraperitoneal and intracranial injections into mice induce hyperactivity. In Conus kintoki (Cone snail), this protein is Conotoxin Kt6.1.